A 368-amino-acid polypeptide reads, in one-letter code: Agmatine deiminase (368 aa).

C357 functions as the Amidino-cysteine intermediate in the catalytic mechanism.

It belongs to the agmatine deiminase family. In terms of assembly, homodimer.

The enzyme catalyses agmatine + H2O = N-carbamoylputrescine + NH4(+). Its pathway is amine and polyamine biosynthesis; putrescine biosynthesis via agmatine pathway; N-carbamoylputrescine from agmatine: step 1/1. In terms of biological role, mediates the hydrolysis of agmatine into N-carbamoylputrescine in the arginine decarboxylase (ADC) pathway of putrescine biosynthesis, a basic polyamine. The chain is Agmatine deiminase from Stutzerimonas stutzeri (strain A1501) (Pseudomonas stutzeri).